The chain runs to 89 residues: Small ribosomal subunit protein uS15 (89 aa).

This sequence belongs to the universal ribosomal protein uS15 family. In terms of assembly, part of the 30S ribosomal subunit. Forms a bridge to the 50S subunit in the 70S ribosome, contacting the 23S rRNA.

Its function is as follows. One of the primary rRNA binding proteins, it binds directly to 16S rRNA where it helps nucleate assembly of the platform of the 30S subunit by binding and bridging several RNA helices of the 16S rRNA. In terms of biological role, forms an intersubunit bridge (bridge B4) with the 23S rRNA of the 50S subunit in the ribosome. This is Small ribosomal subunit protein uS15 from Caulobacter sp. (strain K31).